The following is a 417-amino-acid chain: MFANISISEFDPELAQAIASEDERQEAHIELIASENYCSPAVMEAQGSKLTNKYAEGYPGKRYYGGCEFVDVIEQMAIDRAKELFGADYANVQPHAGSQANSAVYLALLNPGDTVLGMSLAHGGHLTHGAKVSFSGKTYNAVQYGLNAETGEIDYEEVERLALEHKPRMIVAGFSAYSRVVDWQRFRDIADKVGAYLFVDMAHVAGLVAAGVYPNPVQIADVTTTTTHKTLRGPRSGLILAKANEEIEKKLQSAVFPGNQGGPLMHAIAAKAICFKEAMSDDFKAYQQQVVKNAQAMAEVFIARGYDVVSGGTDNHLFLLSLIKQDVTGKDADAWLGAAHITVNKNSVPNDPRSPFVTSGIRIGTPAVTTRGFGEAEVRELAGWIADVIDSKGDEKVIADVKAKVEAVCAKFPVYAK.

(6S)-5,6,7,8-tetrahydrofolate-binding positions include Leu120 and 124 to 126; that span reads GHL. Lys229 is modified (N6-(pyridoxal phosphate)lysine). (6S)-5,6,7,8-tetrahydrofolate is bound at residue 354–356; the sequence is SPF.

Belongs to the SHMT family. Homodimer. The cofactor is pyridoxal 5'-phosphate.

Its subcellular location is the cytoplasm. The catalysed reaction is (6R)-5,10-methylene-5,6,7,8-tetrahydrofolate + glycine + H2O = (6S)-5,6,7,8-tetrahydrofolate + L-serine. It participates in one-carbon metabolism; tetrahydrofolate interconversion. The protein operates within amino-acid biosynthesis; glycine biosynthesis; glycine from L-serine: step 1/1. Its function is as follows. Catalyzes the reversible interconversion of serine and glycine with tetrahydrofolate (THF) serving as the one-carbon carrier. This reaction serves as the major source of one-carbon groups required for the biosynthesis of purines, thymidylate, methionine, and other important biomolecules. Also exhibits THF-independent aldolase activity toward beta-hydroxyamino acids, producing glycine and aldehydes, via a retro-aldol mechanism. In Acinetobacter baumannii (strain AB307-0294), this protein is Serine hydroxymethyltransferase.